Reading from the N-terminus, the 700-residue chain is Inhibitor of carbonic anhydrase (700 aa).

An N-terminal signal peptide occupies residues 1–19; that stretch reads MRLLICALLCLGTLGLCLA. Transferrin-like domains are found at residues 25 to 347 and 355 to 685; these read IRWC…NLKR and VKWC…NFRQ. Disulfide bonds link Cys-28–Cys-67, Cys-38–Cys-58, Cys-137–Cys-213, Cys-172–Cys-188, Cys-175–Cys-198, Cys-185–Cys-196, Cys-246–Cys-260, Cys-358–Cys-390, Cys-368–Cys-381, Cys-415–Cys-695, Cys-438–Cys-658, Cys-470–Cys-545, Cys-494–Cys-686, Cys-504–Cys-518, Cys-515–Cys-528, and Cys-585–Cys-599. Asn-664 is a glycosylation site (N-linked (GlcNAc...) asparagine).

The protein belongs to the transferrin family. In terms of assembly, monomer. Interacts (via transferrin-like domain 2) with CA2. In terms of processing, N-glycosylated. Detected in blood plasma, heart, kidney, liver, colon, lung, spleen, pancreas and testis (at protein level).

It is found in the secreted. Functionally, inhibitor for carbonic anhydrase 2 (CA2). Does not bind iron ions. The sequence is that of Inhibitor of carbonic anhydrase from Mus musculus (Mouse).